A 356-amino-acid polypeptide reads, in one-letter code: RuBisCO accumulation factor 1 (356 aa).

The segment at 7–185 (ALTTEVLQRL…RQALEKLLTD (179 aa)) is N-terminal alpha-helix. The interval 209–342 (PYLVPVAGTA…LLLVLRPPQV (134 aa)) is C-terminal beta-sheet.

The protein belongs to the RAF family. As to quaternary structure, homodimer. Forms an RbcL(8)-Raf1(8) complex. Forms complexes of many stoichiometries with RbcL with and without RbcS. RbcX and Raf1 can bind simultaneously to RbcL.

Its subcellular location is the cytoplasm. Functionally, a major RuBisCO chaperone. Acts after GroEL-GroES chaperonin to fold and/or assemble the large subunit of RuBisCO (ccbL, rbcL). Cooperates with RbcX in RbcL folding, plays the major role in assembly of dimers into RbcL(8)-Raf1(8) intermediate complexes. RbcS replaces Raf1, leading to holoenzyme formation. Its function is as follows. Required for optimal reconstitution of RuBisCO upon expression of rbcL-rbcS subunits in E.coli. Only interacts with the large subunit (cbbL, rbcL). Probably acts in the final stages of RuBisCO assembly, possibly participating in the addition of the small subunit (ccbS, rbcS). This is RuBisCO accumulation factor 1 from Thermosynechococcus vestitus (strain NIES-2133 / IAM M-273 / BP-1).